The following is a 301-amino-acid chain: Protein translocase subunit SecF (301 aa).

A run of 6 helical transmembrane segments spans residues Tyr17–Ile37, Asp137–Phe157, Ile163–Leu183, Ile190–Phe210, Leu239–Gly261, and Ile272–Leu292.

The protein belongs to the SecD/SecF family. SecF subfamily. In terms of assembly, forms a complex with SecD. Part of the essential Sec protein translocation apparatus which comprises SecA, SecYEG and auxiliary proteins SecDF. Other proteins may also be involved.

The protein localises to the cell inner membrane. Part of the Sec protein translocase complex. Interacts with the SecYEG preprotein conducting channel. SecDF uses the proton motive force (PMF) to complete protein translocation after the ATP-dependent function of SecA. In Thermodesulfovibrio yellowstonii (strain ATCC 51303 / DSM 11347 / YP87), this protein is Protein translocase subunit SecF.